The chain runs to 214 residues: Methylthioribulose-1-phosphate dehydratase (214 aa).

H103 and H105 together coordinate Zn(2+).

Belongs to the aldolase class II family. MtnB subfamily. Zn(2+) serves as cofactor.

It carries out the reaction 5-(methylsulfanyl)-D-ribulose 1-phosphate = 5-methylsulfanyl-2,3-dioxopentyl phosphate + H2O. It participates in amino-acid biosynthesis; L-methionine biosynthesis via salvage pathway; L-methionine from S-methyl-5-thio-alpha-D-ribose 1-phosphate: step 2/6. Functionally, catalyzes the dehydration of methylthioribulose-1-phosphate (MTRu-1-P) into 2,3-diketo-5-methylthiopentyl-1-phosphate (DK-MTP-1-P). This is Methylthioribulose-1-phosphate dehydratase from Granulibacter bethesdensis (strain ATCC BAA-1260 / CGDNIH1).